The primary structure comprises 643 residues: Transmembrane 9 superfamily member 4 (643 aa).

The signal sequence occupies residues 1 to 23; the sequence is MAAAMIWWPRFLLLLCLTCKGST. The Extracellular portion of the chain corresponds to 24-282; sequence FYVPGVAPIN…TMSDVQIHWF (259 aa). Residues 283 to 303 traverse the membrane as a helical segment; that stretch reads SIINSVVVVFFLSGILSMIII. The Cytoplasmic segment spans residues 304–347; the sequence is RTLRKDIANYNKEDDIEDTMEESGWKLVHGDVFRPPQYPMILSS. Position 313 is a phosphotyrosine (Tyr-313). The helical transmembrane segment at 348 to 368 threads the bilayer; sequence LLGSGIQLFCMILIVIFVAML. Residues 369–377 are Extracellular-facing; it reads GMLSPSSRG. Residues 378 to 398 traverse the membrane as a helical segment; that stretch reads ALMTTACFLFMFMGVFGGFSA. Topologically, residues 399-417 are cytoplasmic; sequence GRLYRTLKGHRWKKGAFCT. A helical membrane pass occupies residues 418-438; that stretch reads ATLYPGVVFGICFVLNCFIWG. The Extracellular portion of the chain corresponds to 439–450; that stretch reads KHSSGAVPFPTM. A helical transmembrane segment spans residues 451–471; that stretch reads VALLCMWFGISLPLVYLGYYF. Residues 472-502 lie on the Cytoplasmic side of the membrane; sequence GFRKQPYDNPVRTNQIPRQIPEQRWYMNRFV. Residues 503–523 form a helical membrane-spanning segment; it reads GILMAGILPFGAMFIELFFIF. Over 524–536 the chain is Extracellular; it reads SAIWENQFYYLFG. A helical transmembrane segment spans residues 537 to 557; that stretch reads FLFLVFIILVVSCSQISIVMV. The Cytoplasmic segment spans residues 558–571; it reads YFQLCAEDYRWWWR. A helical transmembrane segment spans residues 572 to 592; the sequence is NFLVSGGSAFYVLVYAIFYFV. At 593-599 the chain is on the extracellular side; it reads NKLDIVE. The chain crosses the membrane as a helical span at residues 600–620; it reads FIPSLLYFGYTTLMVLSFWLL. The Cytoplasmic portion of the chain corresponds to 621–643; the sequence is TGTIGFYAAYMFVRKIYAAVKID.

This sequence belongs to the nonaspanin (TM9SF) (TC 9.A.2) family.

It is found in the membrane. The protein localises to the golgi apparatus. The protein resides in the early endosome. Associates with proteins harboring glycine-rich transmembrane domains and ensures their efficient localization to the cell surface. The sequence is that of Transmembrane 9 superfamily member 4 (Tm9sf4) from Mus musculus (Mouse).